Reading from the N-terminus, the 238-residue chain is Phosphoglycolate phosphatase (238 aa).

The active-site Nucleophile is Asp-8. Residues Asp-8 and Asp-10 each coordinate Mg(2+). Lys-163 contributes to the substrate binding site. Positions 186 and 190 each coordinate Mg(2+).

It belongs to the archaeal SPP-like hydrolase family. Mg(2+) serves as cofactor.

It catalyses the reaction 2-phosphoglycolate + H2O = glycolate + phosphate. Its function is as follows. Catalyzes the dephosphorylation of 2-phosphoglycolate. The chain is Phosphoglycolate phosphatase from Staphylothermus marinus (strain ATCC 43588 / DSM 3639 / JCM 9404 / F1).